Here is a 117-residue protein sequence, read N- to C-terminus: Large ribosomal subunit protein bL20 (117 aa).

Belongs to the bacterial ribosomal protein bL20 family.

Its function is as follows. Binds directly to 23S ribosomal RNA and is necessary for the in vitro assembly process of the 50S ribosomal subunit. It is not involved in the protein synthesizing functions of that subunit. In Geobacter metallireducens (strain ATCC 53774 / DSM 7210 / GS-15), this protein is Large ribosomal subunit protein bL20.